Reading from the N-terminus, the 426-residue chain is Oligouridylate-binding protein 1A (426 aa).

Positions 1–26 are disordered; the sequence is MQNQRLIKQQQQQQQQQHQQAMIQQA. Low complexity predominate over residues 9-26; sequence QQQQQQQQQHQQAMIQQA. RRM domains lie at 63–137 and 148–226; these read RSVY…WAYA and FNIF…WATK. Residues 230-268 are disordered; it reads FGEDKHSSDGKSVVELTNGSSEDGRELSNEDAPENNPQF. Residue S250 is modified to Phosphoserine. The RRM 3 domain occupies 269 to 344; that stretch reads TTVYVGNLSP…RQIRCSWGNK (76 aa).

In terms of assembly, interacts with UBA1A and UBA2A.

Its subcellular location is the nucleus. Heterogeneous nuclear ribonucleoprotein (hnRNP)-like protein that acts as a component of the pre-mRNA processing machinery. Functions to facilitate the nuclear maturation of plant pre-mRNAs. This chain is Oligouridylate-binding protein 1A (UBP1A), found in Arabidopsis thaliana (Mouse-ear cress).